Consider the following 441-residue polypeptide: tRNA modification GTPase MnmE (441 aa).

Residues R22, E80, and K118 each coordinate (6S)-5-formyl-5,6,7,8-tetrahydrofolate. The TrmE-type G domain occupies 213–366; the sequence is GIYIAIVGEP…LLNLIKQRVE (154 aa). Residues 223–228, 242–248, and 267–270 each bind GTP; these read NSGKST, SEYAGTT, and DTAG. Residues S227 and T248 each coordinate Mg(2+). (6S)-5-formyl-5,6,7,8-tetrahydrofolate is bound at residue K441.

It belongs to the TRAFAC class TrmE-Era-EngA-EngB-Septin-like GTPase superfamily. TrmE GTPase family. In terms of assembly, homodimer. Heterotetramer of two MnmE and two MnmG subunits. Requires K(+) as cofactor.

Its subcellular location is the cytoplasm. Its function is as follows. Exhibits a very high intrinsic GTPase hydrolysis rate. Involved in the addition of a carboxymethylaminomethyl (cmnm) group at the wobble position (U34) of certain tRNAs, forming tRNA-cmnm(5)s(2)U34. This Ehrlichia canis (strain Jake) protein is tRNA modification GTPase MnmE.